The following is a 353-amino-acid chain: MHLSDFDFDLPETLIATRPARPRSSARLLVAEARGPFRDRRVTDLVDELQPGDRLVLNNTKVIPARLFGTRHRDSAQGPVSAKVEITLLEPASEGWTALAKPLRKLAEGEEIVFSDALRATVAERGADRVRLVFNCTGDDFDAALAQAGAMPLPPYIAAKRAADAQDRDDYQTVFAARKGAVAAPTASLHFDEALLAALRARGVEFSFVTLHVGAGTFLPVKVDDVTTHKMHSEWGEISDQAAAEILATRADGRRVIPVGTTALRLIETAAAQPGGFGPWEGDTDIFIYPGFEFRITDGLMTNFHLPKSTLMMLVSALMGAERIREIYAHAIAQEYRFFSYGDSSLLLPDRGA.

It belongs to the QueA family. As to quaternary structure, monomer.

It is found in the cytoplasm. The enzyme catalyses 7-aminomethyl-7-carbaguanosine(34) in tRNA + S-adenosyl-L-methionine = epoxyqueuosine(34) in tRNA + adenine + L-methionine + 2 H(+). The protein operates within tRNA modification; tRNA-queuosine biosynthesis. Transfers and isomerizes the ribose moiety from AdoMet to the 7-aminomethyl group of 7-deazaguanine (preQ1-tRNA) to give epoxyqueuosine (oQ-tRNA). This chain is S-adenosylmethionine:tRNA ribosyltransferase-isomerase, found in Dinoroseobacter shibae (strain DSM 16493 / NCIMB 14021 / DFL 12).